Reading from the N-terminus, the 265-residue chain is Iron(3+)-hydroxamate import ATP-binding protein FhuC (265 aa).

In terms of domain architecture, ABC transporter spans 12–248 (FALRNISFRV…ETLEMIYGIP (237 aa)). ATP contacts are provided by residues 44–51 (GHNGSGKS) and 168–179 (CLLLDEPTSALD).

The protein belongs to the ABC transporter superfamily. Iron (Fe3+)-hydroxamate importer (TC 3.A.1.14.7) family. In terms of assembly, the complex is composed of two ATP-binding proteins (FhuC), a transmembrane protein (FhuB) and a solute-binding protein (FhuD). FhuC interacts with FhuB.

It is found in the cell inner membrane. It catalyses the reaction ATP + H2O + Fe(3+)-hydroxamate complex-[hydroxamate-binding protein]Side 1 = ADP + phosphate + Fe(3+)-hydroxamate complexSide 2 + [hydroxamate-binding protein]Side 1.. ATPase activity is inhibited by vanadate. In terms of biological role, part of the ABC transporter complex FhuCDB involved in iron(3+)-hydroxamate import. Responsible for energy coupling to the transport system. This is Iron(3+)-hydroxamate import ATP-binding protein FhuC (fhuC) from Escherichia coli (strain K12).